A 437-amino-acid polypeptide reads, in one-letter code: 5-hydroxytryptamine receptor 3B (437 aa).

The signal sequence occupies residues 1-21 (MILLWSCLLVAVVGILGTATP). Over 22–238 (QPGNSSLHRL…VVIRRCPLAY (217 aa)) the chain is Extracellular. N-linked (GlcNAc...) asparagine glycans are attached at residues N25, N92, and N134. C151 and C165 are oxidised to a cystine. The chain crosses the membrane as a helical span at residues 239 to 259 (VVSLLIPSIFLMLVDLGSFYL). At 260-264 (PPNCR) the chain is on the cytoplasmic side. Residues 265-282 (ARIVFKTNVLVGYTVFRV) traverse the membrane as a helical segment. The N-linked (GlcNAc...) asparagine glycan is linked to N283. At 283–292 (NMSDEVPRSA) the chain is on the extracellular side. A helical transmembrane segment spans residues 293 to 313 (GCTPLIGVFFTVCMALLVLSL). The Cytoplasmic portion of the chain corresponds to 314–410 (SKSILLIKFL…WLAILYRFDQ (97 aa)). The interval 377–409 (FWFQFRSINNSLRTRDQIHQKEVEWLAILYRFD) is HA-stretch; determines single-channel conductance in 5-HT3 receptors. Residues 411 to 431 (LLFRIYLAVLGLYTVTLCSLW) traverse the membrane as a helical segment. Topologically, residues 432–437 (ALWSRM) are extracellular.

It belongs to the ligand-gated ion channel (TC 1.A.9) family. 5-hydroxytryptamine receptor (TC 1.A.9.2) subfamily. HTR3B sub-subfamily. As to quaternary structure, forms homopentameric as well as heteropentameric serotonin-activated cation-selective channel complexes with HTR3A. The homomeric complex is not functional. Heteropentameric complexes display properties which resemble that of neuronal serotonin-activated channels in vivo. Post-translationally, N-glycosylation is required for membrane localization.

It localises to the postsynaptic cell membrane. Its subcellular location is the cell membrane. The enzyme catalyses Na(+)(in) = Na(+)(out). It catalyses the reaction K(+)(in) = K(+)(out). The catalysed reaction is Ca(2+)(in) = Ca(2+)(out). Forms serotonin (5-hydroxytryptamine/5-HT3)-activated cation-selective channel complexes, which when activated cause fast, depolarizing responses in neurons. This chain is 5-hydroxytryptamine receptor 3B, found in Mus musculus (Mouse).